A 108-amino-acid chain; its full sequence is Complement inhibitor CirpT2 (108 aa).

The signal sequence occupies residues 1 to 19 (MRTLVASLCVFAVFSAVCC). 4 disulfide bridges follow: C40–C64, C59–C98, C76–C99, and C85–C104.

It belongs to the CirpT family. Expressed in salivary glands.

The protein localises to the secreted. In terms of biological role, complement inhibitor. Prevents complement-mediated activation of C5 by sterically preventing direct binding of C5 to its convertase (binding with domains MG4 and MG5). Binds C5 at a different binding site than the other tick complement inhibitors OmCI and RaCI3, and the drug eculizumab. Inhibits the complement in human, rat and guinea pig, and also shows a reduced inhibition in rabbit and pig. This chain is Complement inhibitor CirpT2, found in Dermacentor andersoni (Rocky mountain wood tick).